The chain runs to 985 residues: Bifunctional glutamine synthetase adenylyltransferase/adenylyl-removing enzyme (985 aa).

Positions 1-460 (MSLPSLADFP…HFRQVIADPD (460 aa)) are adenylyl removase. The segment at 476–985 (GGEWLPLWEE…MRIWAQMGLS (510 aa)) is adenylyl transferase.

This sequence belongs to the GlnE family. Mg(2+) serves as cofactor.

The enzyme catalyses [glutamine synthetase]-O(4)-(5'-adenylyl)-L-tyrosine + phosphate = [glutamine synthetase]-L-tyrosine + ADP. The catalysed reaction is [glutamine synthetase]-L-tyrosine + ATP = [glutamine synthetase]-O(4)-(5'-adenylyl)-L-tyrosine + diphosphate. In terms of biological role, involved in the regulation of glutamine synthetase GlnA, a key enzyme in the process to assimilate ammonia. When cellular nitrogen levels are high, the C-terminal adenylyl transferase (AT) inactivates GlnA by covalent transfer of an adenylyl group from ATP to specific tyrosine residue of GlnA, thus reducing its activity. Conversely, when nitrogen levels are low, the N-terminal adenylyl removase (AR) activates GlnA by removing the adenylyl group by phosphorolysis, increasing its activity. The regulatory region of GlnE binds the signal transduction protein PII (GlnB) which indicates the nitrogen status of the cell. This Pseudomonas syringae pv. tomato (strain ATCC BAA-871 / DC3000) protein is Bifunctional glutamine synthetase adenylyltransferase/adenylyl-removing enzyme.